Here is a 279-residue protein sequence, read N- to C-terminus: Tryptophan synthase alpha chain (279 aa).

Active-site proton acceptor residues include Glu-50 and Asp-61.

It belongs to the TrpA family. Tetramer of two alpha and two beta chains.

It carries out the reaction (1S,2R)-1-C-(indol-3-yl)glycerol 3-phosphate + L-serine = D-glyceraldehyde 3-phosphate + L-tryptophan + H2O. The protein operates within amino-acid biosynthesis; L-tryptophan biosynthesis; L-tryptophan from chorismate: step 5/5. Functionally, the alpha subunit is responsible for the aldol cleavage of indoleglycerol phosphate to indole and glyceraldehyde 3-phosphate. This chain is Tryptophan synthase alpha chain, found in Brucella ovis (strain ATCC 25840 / 63/290 / NCTC 10512).